The sequence spans 57 residues: uncharacterized protein (57 aa).

A signal peptide spans 1 to 24; the sequence is MYDTWFVLTAVVLFVLVLIGNVHG.

As to expression, prismatic layer of shell (at protein level).

It is found in the secreted. This is an uncharacterized protein from Margaritifera margaritifera (Freshwater pearl mussel).